The sequence spans 73 residues: UPF0235 protein PERMA_1406 (73 aa).

Belongs to the UPF0235 family.

In Persephonella marina (strain DSM 14350 / EX-H1), this protein is UPF0235 protein PERMA_1406.